Reading from the N-terminus, the 54-residue chain is Large ribosomal subunit protein bL32 (54 aa).

The interval 1 to 24 is disordered; the sequence is MAVQKSKPTRSKRGMRRSHDSLKE. Basic residues predominate over residues 7-16; that stretch reads KPTRSKRGMR.

It belongs to the bacterial ribosomal protein bL32 family.

In Buchnera aphidicola subsp. Schizaphis graminum (strain Sg), this protein is Large ribosomal subunit protein bL32.